The chain runs to 4912 residues: Probable E3 ubiquitin-protein ligase HERC2 (4912 aa).

The interval 1-67 (MFNRQASGGA…GSGSAAPPSH (67 aa)) is disordered. The segment covering 8 to 17 (GGAGSSGQGA) has biased composition (gly residues). Low complexity predominate over residues 18–31 (GSSQTASAAPVSAG). 2 stretches are compositionally biased toward gly residues: residues 32-41 (VGVGGGGGAS) and 49-59 (SAAGSGSGSGS). RCC1 repeat units follow at residues 634–685 (NHNA…AITC), 686–739 (GGNL…ALTS), 741–789 (GLVF…ALSS), 791–843 (GQLY…ALSS), and 844–897 (SGEV…VWTQ). 3 disordered regions span residues 1102–1129 (RLSPTLGKQQEKEEEEREQQHQEPSTSP), 1428–1475 (QLLQ…PGRG), and 1659–1681 (QEQEKKPQSMPKQELEEQEEEET). The span at 1446–1458 (SHSCHSTAGNTPT) shows a compositional bias: polar residues. The residue at position 1776 (Thr1776) is a Phosphothreonine. Residues 1917 to 1990 (SGPDLAKLMK…QYDLQLADSA (74 aa)) enclose the MIB/HERC2 domain. 2 disordered regions span residues 1994-2018 (ASPTEPEREDVSGSEASPTSDSHPS) and 2381-2412 (GSIYASPDEPDRSDAESQQPGEQDQQLSSGSG). The span at 2396–2412 (ESQQPGEQDQQLSSGSG) shows a compositional bias: polar residues. The 47-residue stretch at 2511 to 2557 (ATDAQLIGQIMEMGFTRRTVELALKQLSLQAEIMPTPEQIVQWILEH) folds into the UBA domain. Residues 2572–2620 (LASSASSHDPEADSDNECPSSNSTTSSSTSSDTVEGQPMAVSGPAPPVK) form a disordered region. Residues 2591 to 2604 (SSNSTTSSSTSSDT) show a composition bias toward low complexity. In terms of domain architecture, CPH spans 2624–2699 (RKDFQTADLY…VCFVHIELVE (76 aa)). Residues 2780–2958 (TSATLPSLGD…FLASEYSAGV (179 aa)) form the DOC domain. 7 RCC1 repeats span residues 2985–3036 (PCTV…IVSQ), 3037–3090 (DGKV…ALTL), 3091–3142 (DGKV…AISS), 3144–3194 (GELY…TLAL), 3197–3248 (DGAV…ALTR), 3250–3300 (GEVW…AVTD), and 3302–3352 (GQVY…AWGL). Disordered stretches follow at residues 3352 to 3374 (LPNASSDEEKRGPVPFSSTRDPL) and 3953 to 4000 (LPSS…EQPD). A compositionally biased stretch (low complexity) spans 3974–3988 (LNSTTSLSSSTVSNV). 7 RCC1 repeats span residues 4049–4099 (STIY…AVTP), 4101–4153 (GKLF…ALTT), 4155–4205 (GEVY…AITA), 4207–4259 (GHVL…CITD), 4261–4311 (DNVW…ALTK), 4313–4363 (GAVY…ACSD), and 4365–4415 (GEVY…ALST). In terms of domain architecture, HECT spans 4547–4882 (ALALPHRVWK…IHFCKSIDTD (336 aa)). Residue Cys4850 is the Glycyl thioester intermediate of the active site. Positions 4891-4912 (EPTEATGSEDNSDLESVASHEG) are disordered.

It localises to the cytoplasm. It is found in the cytoskeleton. The protein resides in the microtubule organizing center. The protein localises to the centrosome. Its subcellular location is the centriole. The catalysed reaction is S-ubiquitinyl-[E2 ubiquitin-conjugating enzyme]-L-cysteine + [acceptor protein]-L-lysine = [E2 ubiquitin-conjugating enzyme]-L-cysteine + N(6)-ubiquitinyl-[acceptor protein]-L-lysine.. It functions in the pathway protein modification; protein ubiquitination. Its function is as follows. Probable E3 ubiquitin-protein ligase which accepts ubiquitin from an E2 ubiquitin-conjugating enzyme in the form of a thioester and then directly transfers the ubiquitin to targeted substrates. This chain is Probable E3 ubiquitin-protein ligase HERC2 (HERC2), found in Drosophila melanogaster (Fruit fly).